We begin with the raw amino-acid sequence, 71 residues long: Small ribosomal subunit protein bS21 (71 aa).

The interval glutamate 39–tyrosine 71 is disordered. Basic residues predominate over residues arginine 45–arginine 59. Residues serine 60–tyrosine 71 show a composition bias toward basic and acidic residues.

Belongs to the bacterial ribosomal protein bS21 family.

This chain is Small ribosomal subunit protein bS21, found in Stenotrophomonas maltophilia (strain K279a).